Here is a 66-residue protein sequence, read N- to C-terminus: U-scoloptoxin(04)-Ssd2a (66 aa).

Residues 1 to 19 (MKAIYILSVLLLMMLPILS) form the signal peptide.

Belongs to the scoloptoxin-04 family. In terms of processing, contains 2 disulfide bonds. In terms of tissue distribution, expressed by the venom gland.

Its subcellular location is the secreted. The protein is U-scoloptoxin(04)-Ssd2a of Scolopendra dehaani (Thai centipede).